Consider the following 217-residue polypeptide: Probable cutinase 3 (217 aa).

An N-terminal signal peptide occupies residues 1–17 (MSLRSLFVAGLATLALA). 2 cysteine pairs are disulfide-bonded: C39-C118 and C65-C79. S129 serves as the catalytic Nucleophile. Cysteines 180 and 187 form a disulfide. D184 is a catalytic residue. The active-site Proton donor/acceptor is the H197.

The protein belongs to the cutinase family.

It is found in the secreted. It catalyses the reaction cutin + H2O = cutin monomers.. In terms of biological role, catalyzes the hydrolysis of complex carboxylic polyesters found in the cell wall of plants. Degrades cutin, a macromolecule that forms the structure of the plant cuticle. In Neosartorya fischeri (strain ATCC 1020 / DSM 3700 / CBS 544.65 / FGSC A1164 / JCM 1740 / NRRL 181 / WB 181) (Aspergillus fischerianus), this protein is Probable cutinase 3.